We begin with the raw amino-acid sequence, 372 residues long: Alanine dehydrogenase 2 (372 aa).

The active site involves histidine 95. An NAD(+)-binding site is contributed by 169–199 (KVTIIGGGQAGTNAAKIALGLGADVTILDVN).

Belongs to the AlaDH/PNT family.

The enzyme catalyses L-alanine + NAD(+) + H2O = pyruvate + NH4(+) + NADH + H(+). The protein operates within amino-acid degradation; L-alanine degradation via dehydrogenase pathway; NH(3) and pyruvate from L-alanine: step 1/1. May play a role in cell wall synthesis as L-alanine is an important constituent of the peptidoglycan layer. This chain is Alanine dehydrogenase 2 (ald2), found in Staphylococcus aureus (strain N315).